Consider the following 469-residue polypeptide: Probable ribonuclease FAU-1 (469 aa).

This sequence belongs to the FAU-1 family.

Probable RNase involved in rRNA stability through maturation and/or degradation of precursor rRNAs. Binds to RNA in loop regions with AU-rich sequences. This is Probable ribonuclease FAU-1 from Pyrococcus abyssi (strain GE5 / Orsay).